The following is a 502-amino-acid chain: Xyloglucan-specific endo-beta-1,4-glucanase BoGH5A (502 aa).

A signal peptide spans 1 to 32 (MEKQSFSDGLFSPLGIKRVIFMLVLLTTSFIS). The N-palmitoyl cysteine moiety is linked to residue Cys33. Cys33 is lipidated: S-diacylglycerol cysteine. The 61-residue stretch at 67–127 (GPAEWHISTS…PDIIINVKQS (61 aa)) folds into the BACON domain. Residues Asn165, Val172, His251, and Asn296 each coordinate substrate. The active-site Proton donor is the Glu297. Glu430 serves as the catalytic Nucleophile. Trp472 provides a ligand contact to substrate.

It belongs to the glycosyl hydrolase 5 (cellulase A) family.

The protein localises to the cell outer membrane. The catalysed reaction is xyloglucan + H2O = xyloglucan oligosaccharides.. Its pathway is glucan metabolism; xyloglucan degradation. In terms of biological role, catalyzes endohydrolysis of 1,4-beta-D-glucosidic linkages in xyloglucan with retention of the beta-configuration of the glycosyl residues in xyloglucan degradation. Cleaves the backbone of the 3 major types of natural xyloglucans (seed galactoxyloglucan from tamarind kernel, dicot fucogalactoxyloglucan from lettuce leaves, and solanaceous arabinogalactoxyloglucan from tomato fruit), to produce xyloglucan oligosaccharides. The protein is Xyloglucan-specific endo-beta-1,4-glucanase BoGH5A of Bacteroides ovatus (strain ATCC 8483 / DSM 1896 / JCM 5824 / BCRC 10623 / CCUG 4943 / NCTC 11153).